The following is a 97-amino-acid chain: Conotoxin Cal6.1a (97 aa).

An N-terminal signal peptide occupies residues 1–22; sequence MKLTTVLVVALLVLAACQFTVT. Residues 23 to 46 form a disordered region; sequence DNSGDDPENPSLRSVGENQNPDST. The propeptide occupies 23–68; sequence DNSGDDPENPSLRSVGENQNPDSTKTITAWATRDMTNMRRGLNRPS. Cystine bridges form between cysteine 71–cysteine 87, cysteine 78–cysteine 91, and cysteine 86–cysteine 96.

The protein belongs to the conotoxin O1 superfamily. As to expression, expressed by the venom duct.

It localises to the secreted. Its function is as follows. Probable neurotoxin with unknown target. Possibly targets ion channels. This Californiconus californicus (California cone) protein is Conotoxin Cal6.1a.